The primary structure comprises 325 residues: Thiamine-monophosphate kinase (325 aa).

Mg(2+) contacts are provided by aspartate 27 and aspartate 44. Residue histidine 51 participates in substrate binding. Residue aspartate 73 coordinates Mg(2+). Residues tyrosine 103, 120–121 (GD), and arginine 147 each bind ATP. Aspartate 121 contributes to the Mg(2+) binding site. Residue aspartate 215 participates in Mg(2+) binding. Serine 217 provides a ligand contact to ATP. Aspartate 218 contacts Mg(2+). Glutamate 264 and tyrosine 321 together coordinate substrate.

This sequence belongs to the thiamine-monophosphate kinase family.

It carries out the reaction thiamine phosphate + ATP = thiamine diphosphate + ADP. Its pathway is cofactor biosynthesis; thiamine diphosphate biosynthesis; thiamine diphosphate from thiamine phosphate: step 1/1. In terms of biological role, catalyzes the ATP-dependent phosphorylation of thiamine-monophosphate (TMP) to form thiamine-pyrophosphate (TPP), the active form of vitamin B1. The chain is Thiamine-monophosphate kinase from Bacillus subtilis (strain 168).